A 525-amino-acid chain; its full sequence is Probable bifunctional tRNA threonylcarbamoyladenosine biosynthesis protein (525 aa).

Positions 1–322 (MPEKRVLGIE…FRSDQVEVTW (322 aa)) are kae1. Positions 106, 110, and 127 each coordinate Fe cation. Residues 127 to 131 (YASGA), D159, G172, E176, and N255 each bind L-threonylcarbamoyladenylate. D283 is a binding site for Fe cation. The Protein kinase domain maps to 331–525 (APGQSETAER…HEIELRGRYL (195 aa)). Residues 338–346 (AERGAEASV) and K355 each bind ATP. The Proton acceptor; for kinase activity role is filled by D442.

In the N-terminal section; belongs to the KAE1 / TsaD family. This sequence in the C-terminal section; belongs to the protein kinase superfamily. Tyr protein kinase family. BUD32 subfamily. As to quaternary structure, component of the KEOPS complex that consists of Kae1, Bud32, Cgi121 and Pcc1; the whole complex dimerizes. Fe(2+) is required as a cofactor.

The protein resides in the cytoplasm. The catalysed reaction is L-seryl-[protein] + ATP = O-phospho-L-seryl-[protein] + ADP + H(+). The enzyme catalyses L-threonyl-[protein] + ATP = O-phospho-L-threonyl-[protein] + ADP + H(+). It catalyses the reaction L-threonylcarbamoyladenylate + adenosine(37) in tRNA = N(6)-L-threonylcarbamoyladenosine(37) in tRNA + AMP + H(+). Its function is as follows. Required for the formation of a threonylcarbamoyl group on adenosine at position 37 (t(6)A37) in tRNAs that read codons beginning with adenine. Is a component of the KEOPS complex that is probably involved in the transfer of the threonylcarbamoyl moiety of threonylcarbamoyl-AMP (TC-AMP) to the N6 group of A37. The Kae1 domain likely plays a direct catalytic role in this reaction. The Bud32 domain probably displays kinase activity that regulates Kae1 function. The protein is Probable bifunctional tRNA threonylcarbamoyladenosine biosynthesis protein of Methanocorpusculum labreanum (strain ATCC 43576 / DSM 4855 / Z).